Here is a 395-residue protein sequence, read N- to C-terminus: uncharacterized protein (395 aa).

This sequence belongs to the UDP-glycosyltransferase family.

This is an uncharacterized protein from Bacillus subtilis (strain 168).